Here is a 363-residue protein sequence, read N- to C-terminus: Neutral protease 2 homolog MEP7 (363 aa).

A signal peptide spans 1 to 19 (MLLCSMVAALAALATPAFS). The propeptide occupies 20–181 (CALPHLDLPE…ARAIQPLDRR (162 aa)). Cystine bridges form between C187–C259 and C266–C284. H308 is a Zn(2+) binding site. The active site involves E309. Residues H312 and D323 each contribute to the Zn(2+) site.

It belongs to the peptidase M35 family. The cofactor is Zn(2+).

Its subcellular location is the secreted. It carries out the reaction Preferential cleavage of bonds with hydrophobic residues in P1'. Also 3-Asn-|-Gln-4 and 8-Gly-|-Ser-9 bonds in insulin B chain.. In terms of biological role, secreted metalloproteinase that allows assimilation of proteinaceous substrates. Shows high activities on basic nuclear substrates such as histone and protamine. May be involved in virulence. This chain is Neutral protease 2 homolog MEP7 (MEP7), found in Coccidioides posadasii (strain C735) (Valley fever fungus).